We begin with the raw amino-acid sequence, 492 residues long: Catalase (492 aa).

Active-site residues include H65 and N138. Y348 provides a ligand contact to heme.

This sequence belongs to the catalase family. Homotetramer. The cofactor is heme.

It is found in the cytoplasm. It localises to the cytosol. Its subcellular location is the peroxisome matrix. It carries out the reaction 2 H2O2 = O2 + 2 H2O. Functionally, catalyzes the degradation of hydrogen peroxide (H(2)O(2)) generated by peroxisomal oxidases to water and oxygen, thereby protecting cells from the toxic effects of hydrogen peroxide. The protein is Catalase of Soldanella alpina (Alpine snowbell).